Reading from the N-terminus, the 470-residue chain is Zinc finger and BTB domain-containing protein 8A.1-A (470 aa).

Residues 24 to 92 (CDCHIIVEGQ…VYSGKLPLSG (69 aa)) enclose the BTB domain. Positions 260–280 (EDEDAASHSWPESPQQESLDQ) are disordered. Over residues 269–278 (WPESPQQESL) the composition is skewed to polar residues. C2H2-type zinc fingers lie at residues 316–338 (FKCP…LRCH) and 344–367 (YPCE…QTIH). Residues 439-450 (GRKENGSERAES) show a composition bias toward basic and acidic residues. The interval 439-470 (GRKENGSERAESDLAIQEVVDSEDDELKEKQD) is disordered.

It is found in the nucleus. In terms of biological role, may be involved in transcriptional regulation. The polypeptide is Zinc finger and BTB domain-containing protein 8A.1-A (zbtb8a.1-a) (Xenopus laevis (African clawed frog)).